A 184-amino-acid polypeptide reads, in one-letter code: UPF0397 protein SAB2561c (184 aa).

Helical transmembrane passes span V11–P31, A44–V64, A77–L97, M111–P131, and Q148–L168.

The protein belongs to the UPF0397 family.

The protein resides in the cell membrane. In Staphylococcus aureus (strain bovine RF122 / ET3-1), this protein is UPF0397 protein SAB2561c.